The chain runs to 64 residues: Cytochrome c oxidase subunit 5C-2 (64 aa).

A helical membrane pass occupies residues S15–W34.

This sequence belongs to the cytochrome c oxidase subunit 5C family.

It localises to the mitochondrion inner membrane. Functionally, this protein is one of the nuclear-coded polypeptide chains of cytochrome c oxidase, the terminal oxidase in mitochondrial electron transport. The chain is Cytochrome c oxidase subunit 5C-2 from Arabidopsis thaliana (Mouse-ear cress).